The primary structure comprises 340 residues: N-acetyl-gamma-glutamyl-phosphate reductase (340 aa).

Residue cysteine 147 is part of the active site.

Belongs to the NAGSA dehydrogenase family. Type 1 subfamily.

It localises to the cytoplasm. The catalysed reaction is N-acetyl-L-glutamate 5-semialdehyde + phosphate + NADP(+) = N-acetyl-L-glutamyl 5-phosphate + NADPH + H(+). The protein operates within amino-acid biosynthesis; L-arginine biosynthesis; N(2)-acetyl-L-ornithine from L-glutamate: step 3/4. Functionally, catalyzes the NADPH-dependent reduction of N-acetyl-5-glutamyl phosphate to yield N-acetyl-L-glutamate 5-semialdehyde. This chain is N-acetyl-gamma-glutamyl-phosphate reductase, found in Lactococcus lactis subsp. lactis (strain IL1403) (Streptococcus lactis).